A 515-amino-acid chain; its full sequence is Slowpoke-binding protein (515 aa).

Positions 1 to 31 (MFKFNKAAQQQRIDNRNSAVTGHDPFVRPPV) are disordered. The span at 7–20 (AAQQQRIDNRNSAV) shows a compositional bias: polar residues. S54 and S79 each carry phosphoserine. Over residues 73 to 82 (SSNRSASSEQ) the composition is skewed to polar residues. Residues 73–94 (SSNRSASSEQDNSDLSEHSEKS) form a disordered region. Positions 191-203 (NWFLVTDASVRTD) are interaction with Slo. Residues 483–503 (SLSEANSPCTPPSTPHDRRTG) are disordered.

In terms of assembly, interacts specifically with Slo; which activates Slo activity. Interacts with 14-3-3-zeta when phosphorylated. Forms a heterotetrameric complex containing phosphorylated Slob, Slo and 14-3-3-zeta, which represses Slo activity due to the indirect interaction between Slo and 14-3-3-zeta. Post-translationally, phosphorylated. Phosphorylation of Ser-54 and Ser-79 is required for the interaction with 14-3-3-zeta but not with that of Slo. Expressed in head. In larval brain, it is expressed in the mushroom body. Also expressed in larval muscles.

It is found in the cytoplasm. Functionally, regulator of calcium-activated channel Slo. Increases or decreases the voltage sensitivity of Slo, depending on the absence or presence of 14-3-3-zeta in the complex, respectively. The polypeptide is Slowpoke-binding protein (Slob) (Drosophila melanogaster (Fruit fly)).